The primary structure comprises 1316 residues: DNA-directed RNA polymerase subunit beta' (1316 aa).

Zn(2+)-binding residues include cysteine 60, cysteine 62, cysteine 75, and cysteine 78. Mg(2+) is bound by residues aspartate 535, aspartate 537, and aspartate 539. Cysteine 891, cysteine 968, cysteine 975, and cysteine 978 together coordinate Zn(2+).

It belongs to the RNA polymerase beta' chain family. As to quaternary structure, the RNAP catalytic core consists of 2 alpha, 1 beta, 1 beta' and 1 omega subunit. When a sigma factor is associated with the core the holoenzyme is formed, which can initiate transcription. Mg(2+) serves as cofactor. Zn(2+) is required as a cofactor.

It catalyses the reaction RNA(n) + a ribonucleoside 5'-triphosphate = RNA(n+1) + diphosphate. DNA-dependent RNA polymerase catalyzes the transcription of DNA into RNA using the four ribonucleoside triphosphates as substrates. This chain is DNA-directed RNA polymerase subunit beta', found in Mycobacterium tuberculosis (strain CDC 1551 / Oshkosh).